We begin with the raw amino-acid sequence, 223 residues long: UPF0441 protein YgiB (223 aa).

Residues 178–195 (TVPKTAMAPKPATTTTVT) show a composition bias toward low complexity. A disordered region spans residues 178-223 (TVPKTAMAPKPATTTTVTRGGFGESVAKQSTLQRSATGTSSRSMGG). Polar residues predominate over residues 204 to 223 (AKQSTLQRSATGTSSRSMGG).

It belongs to the UPF0441 family.

The protein is UPF0441 protein YgiB of Escherichia coli (strain ATCC 8739 / DSM 1576 / NBRC 3972 / NCIMB 8545 / WDCM 00012 / Crooks).